The sequence spans 347 residues: Heat-inducible transcription repressor HrcA (347 aa).

Belongs to the HrcA family.

Functionally, negative regulator of class I heat shock genes (grpE-dnaK-dnaJ and groELS operons). Prevents heat-shock induction of these operons. In Desulforamulus reducens (strain ATCC BAA-1160 / DSM 100696 / MI-1) (Desulfotomaculum reducens), this protein is Heat-inducible transcription repressor HrcA.